Here is a 124-residue protein sequence, read N- to C-terminus: Small ribosomal subunit protein uS12 (124 aa).

D89 carries the post-translational modification 3-methylthioaspartic acid.

It belongs to the universal ribosomal protein uS12 family. Part of the 30S ribosomal subunit. Contacts proteins S8 and S17. May interact with IF1 in the 30S initiation complex.

With S4 and S5 plays an important role in translational accuracy. Its function is as follows. Interacts with and stabilizes bases of the 16S rRNA that are involved in tRNA selection in the A site and with the mRNA backbone. Located at the interface of the 30S and 50S subunits, it traverses the body of the 30S subunit contacting proteins on the other side and probably holding the rRNA structure together. The combined cluster of proteins S8, S12 and S17 appears to hold together the shoulder and platform of the 30S subunit. The protein is Small ribosomal subunit protein uS12 of Yersinia enterocolitica serotype O:8 / biotype 1B (strain NCTC 13174 / 8081).